A 428-amino-acid chain; its full sequence is Tyrosine--tRNA ligase (428 aa).

Tyrosine 34 contributes to the L-tyrosine binding site. A 'HIGH' region motif is present at residues 39–48 (PTADSLHIGH). The L-tyrosine site is built by tyrosine 171 and glutamine 175. The 'KMSKS' region signature appears at 236–240 (KFGKT). Lysine 239 contributes to the ATP binding site. An S4 RNA-binding domain is found at 358-424 (VGLIDLLVDA…GKKKYFLIQV (67 aa)).

It belongs to the class-I aminoacyl-tRNA synthetase family. TyrS type 1 subfamily. Homodimer.

It is found in the cytoplasm. The catalysed reaction is tRNA(Tyr) + L-tyrosine + ATP = L-tyrosyl-tRNA(Tyr) + AMP + diphosphate + H(+). Its function is as follows. Catalyzes the attachment of tyrosine to tRNA(Tyr) in a two-step reaction: tyrosine is first activated by ATP to form Tyr-AMP and then transferred to the acceptor end of tRNA(Tyr). This is Tyrosine--tRNA ligase from Oceanobacillus iheyensis (strain DSM 14371 / CIP 107618 / JCM 11309 / KCTC 3954 / HTE831).